Consider the following 248-residue polypeptide: MFQKVEGIVIRTTDYGETNKIVTIYSREFGKVSAMARGAKKPKSRLAAISQLMTHGHFLIQMGSGLGTLQQGEIISSMKEIREDIFLTAYASFIIELTDKATEDKKHNPYLFEMLYQTLHYMCEGVDPEVLSLIYQTKMLPVLGMRPYFDTCAICHQETDFVAFSVREGGFLCSRHAEQDPYRIPVGEAVHKLLRLFFHFDLHRLGNVSVKDSTKKQMRTVLNTYYDEYCGIYLKTRRFLEQLDKFQI.

It belongs to the RecO family.

Functionally, involved in DNA repair and RecF pathway recombination. In Bacillus mycoides (strain KBAB4) (Bacillus weihenstephanensis), this protein is DNA repair protein RecO.